A 417-amino-acid polypeptide reads, in one-letter code: Carbon catabolite repressor protein 4 homolog 4 (417 aa).

The residue at position 2 (Phe-2) is an N-acetylserine. Glu-143 serves as a coordination point for Mg(2+).

This sequence belongs to the CCR4/nocturin family. Component of the CCR4-NOT complex, at least composed of CRR4 and CAF1 proteins. Forms homooligomers. The cofactor is Mg(2+).

It localises to the nucleus. The protein resides in the cytoplasm. It carries out the reaction Exonucleolytic cleavage of poly(A) to 5'-AMP.. Its function is as follows. Acts as a catalytic component of the CCR4-NOT core complex, which in the nucleus seems to be a general transcription factor, and in the cytoplasm the major mRNA deadenylase involved in mRNA turnover. Transcriptional regulator of circadian rhythms with poly(A)-degrading activity that affects the expression and rhythmicity of the clock core oscillator genes TOC1 and CCA1. Deadenylation may be a mechanism involved in the regulation of the circadian clock. May play a negative role in response against oxidative stress. Possesses magnesium-dependent poly(A)-specific exoribonuclease activity in vitro and is almost inactive with poly(U), poly(C) and poly(G) as substrates. The sequence is that of Carbon catabolite repressor protein 4 homolog 4 from Arabidopsis thaliana (Mouse-ear cress).